The chain runs to 231 residues: Protein FMP52, mitochondrial (231 aa).

The N-terminal 44 residues, 1-44 (MNGLVLGATGLCGGGFLRHAQEAPQFSKVYAILRRELPFPATDK), are a transit peptide targeting the mitochondrion.

Belongs to the FMP52 family.

The protein resides in the mitochondrion outer membrane. The protein is Protein FMP52, mitochondrial (FMP52) of Saccharomyces cerevisiae (strain ATCC 204508 / S288c) (Baker's yeast).